A 284-amino-acid polypeptide reads, in one-letter code: Formate channel FocA (284 aa).

Residues 1–34 (MASENQKLSSVALTPVEATDYAENTATYKANKRP) are Cytoplasmic-facing. A helical transmembrane segment spans residues 35 to 55 (FLSFMSGISAGACIALAFVFY). The Periplasmic segment spans residues 56-72 (TTTQTASAGAPWGLTKL). Residues 73 to 93 (VGGLVFSLGVIMVVILGSELF) traverse the membrane as a helical segment. The Cytoplasmic segment spans residues 94 to 116 (TSSTLTLVARVGGRITTTQMIRN). Residues 117–137 (WIVVYLGNFVGGLFIAAVIWF) form a helical membrane-spanning segment. Topologically, residues 138–163 (SGQTMAANGQWGLTILATAQHKIHHT) are periplasmic. Residues 164 to 184 (WFEAFNLGILCNIMVCVAVWM) form a helical membrane-spanning segment. Residues 185–194 (SYSGKTVTDK) are Cytoplasmic-facing. Residues 195 to 215 (AFIMIMPIGLFVASGFEHCVA) traverse the membrane as a helical segment. Over 216-252 (NMFMIPMGIITAHFSTPEFWQQIGVDPMKYADLDLYH) the chain is Periplasmic. The chain crosses the membrane as a helical span at residues 253 to 273 (FIVKNLIPVTLGNIVGGAICI). At 274–284 (GVFQRYLTKTH) the chain is on the cytoplasmic side.

This sequence belongs to the FNT transporter (TC 1.A.16) family. Homopentamer.

It localises to the cell inner membrane. It carries out the reaction formate(in) = formate(out). In terms of biological role, involved in the bidirectional transport of formate during mixed-acid fermentation. Functions to maintain relatively constant intracellular formate levels during growth, using different mechanisms for efflux and uptake of the anion. The chain is Formate channel FocA (focA) from Haemophilus influenzae (strain ATCC 51907 / DSM 11121 / KW20 / Rd).